A 320-amino-acid polypeptide reads, in one-letter code: N-acetylneuraminate lyase (320 aa).

Aceneuramate-binding residues include Thr-51 and Thr-52. Tyr-143 acts as the Proton donor in catalysis. Lys-173 (schiff-base intermediate with substrate) is an active-site residue. Residues Ser-175, Gly-199, Asp-201, Glu-202, and Ser-218 each coordinate aceneuramate.

Belongs to the DapA family. NanA subfamily. As to quaternary structure, homotetramer.

Its subcellular location is the cytoplasm. It catalyses the reaction aceneuramate = aldehydo-N-acetyl-D-mannosamine + pyruvate. Its pathway is amino-sugar metabolism; N-acetylneuraminate degradation. In terms of biological role, catalyzes the cleavage of N-acetylneuraminic acid (sialic acid) to form pyruvate and N-acetylmannosamine via a Schiff base intermediate. It prevents sialic acids from being recycled and returning to the cell surface. Involved in the N-glycolylneuraminic acid (Neu5Gc) degradation pathway. This is N-acetylneuraminate lyase from Rattus norvegicus (Rat).